We begin with the raw amino-acid sequence, 821 residues long: KN motif and ankyrin repeat domain-containing protein 3 (821 aa).

The span at 1-10 (MAKFALNQNL) shows a compositional bias: polar residues. Disordered stretches follow at residues 1-36 (MAKFALNQNLPDLGGPRLCPVPAAGGARSPSSPYSV), 58-184 (GPAA…AQLQ), 224-333 (LLAG…APET), and 385-547 (AAEE…GRCE). A compositionally biased stretch (low complexity) spans 77-88 (RPGLAGARSPGA). Residues 128–150 (PRVEHTLRETSRRLELAQTHERA) show a composition bias toward basic and acidic residues. Over residues 151-181 (PSPGRGVPRSPRGSGRSSPAPNLAPASPGPA) the composition is skewed to low complexity. A phosphoserine mark is found at Ser152, Ser160, Ser164, Ser167, Ser168, and Ser177. A coiled-coil region spans residues 181–230 (AQLQLVREQMAAALRRLRELEDQARTLPELQEQVRALRAEKARLLAGRAQ). Residues 237–261 (AETRPDKLAQLRRLTERLATSERGG) show a composition bias toward basic and acidic residues. 3 positions are modified to phosphoserine: Ser271, Ser280, and Ser293. Positions 367-404 (GVSELLRGRLRELEEAREAAEEAAAGARAQLREATTQT) form a coiled coil. Low complexity-rich tracts occupy residues 388–400 (EAAAGARAQLREA) and 494–507 (NGGAEPPGSSSGSG). 5 ANK repeats span residues 622 to 652 (NGNTALHYSVSHGNLAIASLLLDTGACEVNR), 656 to 690 (AGYSALMLAALTSVRQEEEDMAVVQRLFCMGDVNA), 695 to 724 (TGQTALMLAISHGRQDMVATLLACGADVNA), 728 to 758 (DGATALMCASEYGRLDTVRLLLTQPGCDPAI), and 762 to 785 (EGTSALAIALEAEQDEVAALLHAH). The interval 784-821 (AHLSSGQPDTQSESPPGSQTATPGEGECGDNGENPQVQ) is disordered. Residues 787–805 (SSGQPDTQSESPPGSQTAT) show a composition bias toward polar residues.

In terms of tissue distribution, strongly expressed in breast, liver, lung, skeletal muscle and kidney.

Its function is as follows. May be involved in the control of cytoskeleton formation by regulating actin polymerization. This Homo sapiens (Human) protein is KN motif and ankyrin repeat domain-containing protein 3.